We begin with the raw amino-acid sequence, 147 residues long: Putative pre-16S rRNA nuclease (147 aa).

This sequence belongs to the YqgF nuclease family.

It is found in the cytoplasm. Its function is as follows. Could be a nuclease involved in processing of the 5'-end of pre-16S rRNA. This Acinetobacter baylyi (strain ATCC 33305 / BD413 / ADP1) protein is Putative pre-16S rRNA nuclease.